The chain runs to 517 residues: Putative thymidine phosphorylase (517 aa).

This sequence belongs to the thymidine/pyrimidine-nucleoside phosphorylase family. Type 2 subfamily.

The enzyme catalyses thymidine + phosphate = 2-deoxy-alpha-D-ribose 1-phosphate + thymine. The polypeptide is Putative thymidine phosphorylase (Legionella pneumophila subsp. pneumophila (strain Philadelphia 1 / ATCC 33152 / DSM 7513)).